A 292-amino-acid polypeptide reads, in one-letter code: MSQDVNKLSKQPTPDKAEDNAFFPSPYSLSQYTAPKTDFDGVEHKGAYKDGKWKVLMIAAEERYVLLENGKMFSTGNHPVEMLLPLHHLMEAGFDVDVATLSGYPAKLELWAMPTEDEAVISTYNKLKEKLKQPKKLADVIKNELGPDSDYLSVFIPGGHAAVVGISESEDVQQTLDWALENDRFIVTLCHGPAALLSAGLNREKSPLEGYSVCVFPDSLDEGANIEIGYLPGRLKWLVADLLTKQSLKVVNDDMTGRTLKDRKLLTGDSPLASNELGKLAVNEMLNAIQNK.

Polar residues predominate over residues 1–12 (MSQDVNKLSKQP). The disordered stretch occupies residues 1-23 (MSQDVNKLSKQPTPDKAEDNAFF). The active-site Nucleophile is Cys190.

The protein belongs to the peptidase C56 family. HchA subfamily.

The protein localises to the cytoplasm. It catalyses the reaction N(omega)-(1-hydroxy-2-oxopropyl)-L-arginyl-[protein] + H2O = lactate + L-arginyl-[protein] + H(+). It carries out the reaction N(6)-(1-hydroxy-2-oxopropyl)-L-lysyl-[protein] + H2O = lactate + L-lysyl-[protein] + H(+). The enzyme catalyses S-(1-hydroxy-2-oxopropyl)-L-cysteinyl-[protein] + H2O = lactate + L-cysteinyl-[protein] + H(+). The catalysed reaction is N(omega)-(1-hydroxy-2-oxoethyl)-L-arginyl-[protein] + H2O = L-arginyl-[protein] + glycolate + H(+). It catalyses the reaction N(6)-(1-hydroxy-2-oxoethyl)-L-lysyl-[protein] + H2O = glycolate + L-lysyl-[protein] + H(+). It carries out the reaction S-(1-hydroxy-2-oxoethyl)-L-cysteinyl-[protein] + H2O = glycolate + L-cysteinyl-[protein] + H(+). The enzyme catalyses N(2)-(1-hydroxy-2-oxopropyl)-dGTP + H2O = lactate + dGTP + H(+). The catalysed reaction is N(2)-(1-hydroxy-2-oxopropyl)-GTP + H2O = lactate + GTP + H(+). It catalyses the reaction N(2)-(1-hydroxy-2-oxopropyl)-GDP + H2O = lactate + GDP + H(+). It carries out the reaction N(2)-(1-hydroxy-2-oxopropyl)-GMP + H2O = lactate + GMP + H(+). The enzyme catalyses N(2)-(1-hydroxy-2-oxoethyl)-dGTP + H2O = dGTP + glycolate + H(+). The catalysed reaction is N(2)-(1-hydroxy-2-oxoethyl)-GTP + H2O = glycolate + GTP + H(+). It catalyses the reaction N(2)-(1-hydroxy-2-oxoethyl)-GDP + H2O = glycolate + GDP + H(+). It carries out the reaction N(2)-(1-hydroxy-2-oxoethyl)-GMP + H2O = glycolate + GMP + H(+). The enzyme catalyses an N(2)-(1-hydroxy-2-oxopropyl)-guanosine in RNA + H2O = a guanosine in RNA + lactate + H(+). The catalysed reaction is an N(2)-(1-hydroxy-2-oxopropyl)-2'-deoxyguanosine in DNA + H2O = a 2'-deoxyguanosine in DNA + lactate + H(+). It catalyses the reaction an N(2)-(1-hydroxy-2-oxoethyl)-guanosine in RNA + H2O = a guanosine in RNA + glycolate + H(+). It carries out the reaction an N(2)-(1-hydroxy-2-oxoethyl)-2'-deoxyguanosine in DNA + H2O = a 2'-deoxyguanosine in DNA + glycolate + H(+). Functionally, protein and nucleotide deglycase that catalyzes the deglycation of the Maillard adducts formed between amino groups of proteins or nucleotides and reactive carbonyl groups of glyoxals. Thus, functions as a protein deglycase that repairs methylglyoxal- and glyoxal-glycated proteins, and releases repaired proteins and lactate or glycolate, respectively. Deglycates cysteine, arginine and lysine residues in proteins, and thus reactivates these proteins by reversing glycation by glyoxals. Acts on early glycation intermediates (hemithioacetals and aminocarbinols), preventing the formation of Schiff bases and advanced glycation endproducts (AGE). Also functions as a nucleotide deglycase able to repair glycated guanine in the free nucleotide pool (GTP, GDP, GMP, dGTP) and in DNA and RNA. Is thus involved in a major nucleotide repair system named guanine glycation repair (GG repair), dedicated to reversing methylglyoxal and glyoxal damage via nucleotide sanitization and direct nucleic acid repair. Plays an important role in protecting cells from carbonyl stress. The chain is Protein/nucleic acid deglycase HchA from Staphylococcus aureus (strain MRSA252).